Here is an 89-residue protein sequence, read N- to C-terminus: Small ribosomal subunit protein bS20 (89 aa).

The disordered stretch occupies residues 1–21 (MANSAQAKKRARQNVKARKHN). Positions 7 to 21 (AKKRARQNVKARKHN) are enriched in basic residues.

It belongs to the bacterial ribosomal protein bS20 family.

Its function is as follows. Binds directly to 16S ribosomal RNA. In Acinetobacter baylyi (strain ATCC 33305 / BD413 / ADP1), this protein is Small ribosomal subunit protein bS20.